Here is a 100-residue protein sequence, read N- to C-terminus: Large ribosomal subunit protein uL23 (100 aa).

The protein belongs to the universal ribosomal protein uL23 family. Part of the 50S ribosomal subunit. Contacts protein L29, and trigger factor when it is bound to the ribosome.

In terms of biological role, one of the early assembly proteins it binds 23S rRNA. One of the proteins that surrounds the polypeptide exit tunnel on the outside of the ribosome. Forms the main docking site for trigger factor binding to the ribosome. The sequence is that of Large ribosomal subunit protein uL23 from Mycobacterium marinum (strain ATCC BAA-535 / M).